Consider the following 579-residue polypeptide: Adenine deaminase (579 aa).

This sequence belongs to the metallo-dependent hydrolases superfamily. Adenine deaminase family. It depends on Mn(2+) as a cofactor.

It carries out the reaction adenine + H2O + H(+) = hypoxanthine + NH4(+). This is Adenine deaminase from Listeria welshimeri serovar 6b (strain ATCC 35897 / DSM 20650 / CCUG 15529 / CIP 8149 / NCTC 11857 / SLCC 5334 / V8).